The chain runs to 209 residues: COP9 signalosome complex subunit 8 (209 aa).

The PCI domain occupies 8–179 (ESAFSFKKLL…GALDVSFNKF (172 aa)). A Phosphoserine modification is found at Ser175.

This sequence belongs to the CSN8 family. As to quaternary structure, component of the CSN complex, composed of COPS1/GPS1, COPS2, COPS3, COPS4, COPS5, COPS6, COPS7 (COPS7A or COPS7B), COPS8 and COPS9. In the complex, it probably interacts directly with COPS3, COPS4 and COPS7 (COPS7A or COPS7B).

It is found in the cytoplasm. The protein resides in the nucleus. Its function is as follows. Component of the COP9 signalosome complex (CSN), a complex involved in various cellular and developmental processes. The CSN complex is an essential regulator of the ubiquitin (Ubl) conjugation pathway by mediating the deneddylation of the cullin subunits of SCF-type E3 ligase complexes, leading to decrease the Ubl ligase activity of SCF-type complexes such as SCF, CSA or DDB2. The complex is also involved in phosphorylation of p53/TP53, c-jun/JUN, IkappaBalpha/NFKBIA, ITPK1 and IRF8/ICSBP, possibly via its association with CK2 and PKD kinases. CSN-dependent phosphorylation of TP53 and JUN promotes and protects degradation by the Ubl system, respectively. The protein is COP9 signalosome complex subunit 8 (COPS8) of Pongo abelii (Sumatran orangutan).